The chain runs to 240 residues: Phosphoribosylaminoimidazole-succinocarboxamide synthase (240 aa).

This sequence belongs to the SAICAR synthetase family.

It catalyses the reaction 5-amino-1-(5-phospho-D-ribosyl)imidazole-4-carboxylate + L-aspartate + ATP = (2S)-2-[5-amino-1-(5-phospho-beta-D-ribosyl)imidazole-4-carboxamido]succinate + ADP + phosphate + 2 H(+). It functions in the pathway purine metabolism; IMP biosynthesis via de novo pathway; 5-amino-1-(5-phospho-D-ribosyl)imidazole-4-carboxamide from 5-amino-1-(5-phospho-D-ribosyl)imidazole-4-carboxylate: step 1/2. This chain is Phosphoribosylaminoimidazole-succinocarboxamide synthase, found in Pyrobaculum calidifontis (strain DSM 21063 / JCM 11548 / VA1).